The chain runs to 156 residues: Snaclec A12 (156 aa).

Positions 1–23 are cleaved as a signal peptide; sequence MGRSISVSFGLLVVFLSLSGTGA. Intrachain disulfides connect C27–C38, C55–C148, and C123–C140. The C-type lectin domain occupies 34-149; sequence YEGHCYKVFN…CELAYHFICM (116 aa).

Belongs to the snaclec family. In terms of assembly, heterodimer; disulfide-linked. In terms of tissue distribution, expressed by the venom gland.

It is found in the secreted. Interferes with one step of hemostasis (modulation of platelet aggregation, or coagulation cascade, for example). The protein is Snaclec A12 of Macrovipera lebetinus (Levantine viper).